A 332-amino-acid chain; its full sequence is Transaldolase (332 aa).

Residue lysine 135 is the Schiff-base intermediate with substrate of the active site.

The protein belongs to the transaldolase family. Type 1 subfamily. As to quaternary structure, homodimer.

The protein resides in the cytoplasm. The catalysed reaction is D-sedoheptulose 7-phosphate + D-glyceraldehyde 3-phosphate = D-erythrose 4-phosphate + beta-D-fructose 6-phosphate. The protein operates within carbohydrate degradation; pentose phosphate pathway; D-glyceraldehyde 3-phosphate and beta-D-fructose 6-phosphate from D-ribose 5-phosphate and D-xylulose 5-phosphate (non-oxidative stage): step 2/3. Transaldolase is important for the balance of metabolites in the pentose-phosphate pathway. The polypeptide is Transaldolase (Prochlorococcus marinus (strain NATL2A)).